The sequence spans 688 residues: Protein SDA1 homolog (688 aa).

A phosphoserine mark is found at Ser232, Ser234, and Ser236. Residues Lys254–Met318 are a coiled coil. Acidic residues predominate over residues Val484–Trp498. A disordered region spans residues Val484–Gln524. The span at Val514–Gln524 shows a compositional bias: basic and acidic residues. A phosphoserine mark is found at Ser586 and Ser596. The tract at residues Lys605–Lys688 is disordered. Residues Ser668–Leu681 show a composition bias toward basic and acidic residues.

The protein belongs to the SDA1 family.

Its subcellular location is the nucleus. The protein resides in the nucleolus. In terms of biological role, required for 60S pre-ribosomal subunits export to the cytoplasm. This is Protein SDA1 homolog (SDAD1) from Bos taurus (Bovine).